A 302-amino-acid chain; its full sequence is Recombination-associated protein RdgC (302 aa).

It belongs to the RdgC family.

The protein localises to the cytoplasm. It localises to the nucleoid. Its function is as follows. May be involved in recombination. The protein is Recombination-associated protein RdgC of Tolumonas auensis (strain DSM 9187 / NBRC 110442 / TA 4).